The following is a 76-amino-acid chain: Kappa-actitoxin-Avd4o (76 aa).

Residues 1 to 19 (MNKALFLSLVVLCAAVVFA) form the signal peptide. A propeptide spanning residues 20 to 33 (AEDLQKAKHAPFKL) is cleaved from the precursor. 3 disulfide bridges follow: C37/C72, C39/C65, and C55/C73.

It belongs to the sea anemone type 3 (BDS) potassium channel toxin family. As to expression, experimental results show no expression in the ectodermal tissue from the distal and proximal tentacles, body wall, and oral disk. Since paralogs are expressed in this tissue, an expression of this toxin in this tissue is probable. The negative results could be explained by the very low abundance of EST sequences.

It localises to the secreted. The protein localises to the nematocyst. In terms of biological role, blocks Kv3 voltage-gated potassium channels. Reduces blood pressure. The polypeptide is Kappa-actitoxin-Avd4o (Anemonia viridis (Snakelocks anemone)).